Reading from the N-terminus, the 143-residue chain is Large ribosomal subunit protein uL13 (143 aa).

Belongs to the universal ribosomal protein uL13 family. Part of the 50S ribosomal subunit.

In terms of biological role, this protein is one of the early assembly proteins of the 50S ribosomal subunit, although it is not seen to bind rRNA by itself. It is important during the early stages of 50S assembly. The polypeptide is Large ribosomal subunit protein uL13 (Natranaerobius thermophilus (strain ATCC BAA-1301 / DSM 18059 / JW/NM-WN-LF)).